The chain runs to 883 residues: Aldehyde-alcohol dehydrogenase (883 aa).

The interval 13 to 456 is aldehyde dehydrogenase; the sequence is KLVAEKHVDE…DNVSAINLLN (444 aa). Residues 121 to 126, Gly-206, and Gly-224 contribute to the NAD(+) site; that span reads ITPTTN. The active-site Nucleophile is the Cys-257. Residues Glu-355, Leu-435, and 438–443 contribute to the NAD(+) site; that span reads GSYGRN. The segment at 457–464 is linker; sequence IKKVGRRR. NAD(+) is bound by residues Asp-500, Asp-534, 561–565, 612–613, Val-625, Lys-634, and Leu-653; these read GSPMD and TT. Fe cation contacts are provided by Asp-668, His-672, His-736, and His-750.

The protein in the N-terminal section; belongs to the aldehyde dehydrogenase family. It in the C-terminal section; belongs to the iron-containing alcohol dehydrogenase family. Requires Fe(2+) as cofactor.

The catalysed reaction is an aldehyde + NAD(+) + H2O = a carboxylate + NADH + 2 H(+). The enzyme catalyses ethanol + NAD(+) = acetaldehyde + NADH + H(+). Its function is as follows. Has alcohol dehydrogenase activity. Has aldehyde dehydrogenase activity. Plays a role in enhancing virulence in mice, under ethanol stress conditions, perhaps by inducing expression of pneumolysin (Ply) and increasing production of hydrogen peroxide H(2)O(2). May be considered a potential virulence factor. The polypeptide is Aldehyde-alcohol dehydrogenase (Streptococcus pneumoniae serotype 2 (strain D39 / NCTC 7466)).